The sequence spans 552 residues: uncharacterized protein (552 aa).

One can recognise a DhaL domain in the interval 8-200; that stretch reads KLFADMIIQG…LLCVYEGFLK (193 aa).

This is an uncharacterized protein from Staphylococcus epidermidis (strain ATCC 12228 / FDA PCI 1200).